The chain runs to 191 residues: Cathelicidin-related antimicrobial peptide Na_CRAMP (191 aa).

The first 22 residues, 1 to 22, serve as a signal peptide directing secretion; it reads MEGFFWKTLLVVGALTISGTSS. A propeptide spanning residues 23–161 is cleaved from the precursor; it reads FPHKPLTYEE…DQPKRVKRFK (139 aa). 2 cysteine pairs are disulfide-bonded: cysteine 81/cysteine 92 and cysteine 103/cysteine 120. The interval 126–154 is disordered; sequence EEEQKQEEGNEEEKEVEKEEKEEDQKDQP. Positions 140 to 154 are enriched in basic and acidic residues; sequence EVEKEEKEEDQKDQP.

Belongs to the cathelicidin family. Expressed by the venom gland.

It is found in the secreted. The protein resides in the target cell membrane. Its function is as follows. Potent antimicrobial peptide against most of Gram-negative bacteria, some Gram-positive bacteria (Bacillus) and some fungi. Adopts an amphipathic alpha helical conformation, that may allow to partition into the target membrane. No hemolytic and cytotoxic activities have been observed on mammalian cells. This is Cathelicidin-related antimicrobial peptide Na_CRAMP from Naja atra (Chinese cobra).